The sequence spans 293 residues: Triosephosphate isomerase (293 aa).

25 to 27 lines the substrate pocket; sequence NWK. H117 acts as the Electrophile in catalysis. E218 (proton acceptor) is an active-site residue.

This sequence belongs to the triosephosphate isomerase family. As to quaternary structure, homodimer.

The protein resides in the cytoplasm. The enzyme catalyses D-glyceraldehyde 3-phosphate = dihydroxyacetone phosphate. It participates in carbohydrate biosynthesis; gluconeogenesis. It functions in the pathway carbohydrate degradation; glycolysis; D-glyceraldehyde 3-phosphate from glycerone phosphate: step 1/1. Involved in the gluconeogenesis. Catalyzes stereospecifically the conversion of dihydroxyacetone phosphate (DHAP) to D-glyceraldehyde-3-phosphate (G3P). This chain is Triosephosphate isomerase, found in Tropheryma whipplei (strain TW08/27) (Whipple's bacillus).